We begin with the raw amino-acid sequence, 981 residues long: GPI ethanolamine phosphate transferase 1 (981 aa).

Residues 1–6 (MAGSSR) are Cytoplasmic-facing. Residues 7–27 (IGFMAIAVAFHLVYILSIFDI) traverse the membrane as a helical segment. Over 28–464 (YFVSPIVTGM…LQTYDWLFLR (437 aa)) the chain is Lumenal. N-linked (GlcNAc...) asparagine glycans are attached at residues Asn-148, Asn-211, and Asn-295. Residues 465–485 (ALITIGYLGWMAYATTTVLSL) form a helical membrane-spanning segment. Topologically, residues 486 to 496 (YVVKESMSPQR) are cytoplasmic. A helical membrane pass occupies residues 497–517 (TLLGSAFFLSLLVALYSSFII). Topologically, residues 518 to 519 (SK) are lumenal. The helical transmembrane segment at 520–540 (SPPAYYLYAFFPVLFWEEVYA) threads the bilayer. Residues 541-560 (RRANVAKGFQALFGHVKSGG) are Cytoplasmic-facing. A helical membrane pass occupies residues 561–581 (AVVALVFNVVLYLGVIQSLAL). At 582–587 (AYIHRE) the chain is on the lumenal side. Residues 588-608 (ILTGLFVLGAFWPMTQGISFL) traverse the membrane as a helical segment. Over 609-611 (RSH) the chain is Cytoplasmic. A helical transmembrane segment spans residues 612–632 (LFLSMLWFFSCLAMSTFTLLP). The Lumenal segment spans residues 633–638 (AMKVED). The helical transmembrane segment at 639 to 659 (IPLIMAGGGLMTFVGLAYLVL) threads the bilayer. The Cytoplasmic portion of the chain corresponds to 660–681 (EDFILSDVSSSKTKLKRLHTSR). A helical membrane pass occupies residues 682 to 702 (TLLGIQVGLIILAMLVTHSSA). The Lumenal segment spans residues 703 to 708 (TSLQAK). A helical membrane pass occupies residues 709 to 729 (LGLPKGNQIVGWFVLVTSLLM). Residues 730-744 (PLAYRLQPNSHYMHR) are Cytoplasmic-facing. A helical membrane pass occupies residues 745–767 (LAIIFLTCAPTFVILTISYEGLF). Residues 768-819 (YVAFSITLLSWVRLEYAVDAFTQEKAKKQATVAGSQQHTPSTFRPLSLSDAR) lie on the Lumenal side of the membrane. The chain crosses the membrane as a helical span at residues 820-840 (IALFFMVLLQSAFFSTGNIAS). Residues 841-862 (ISSFSLESVSRLIPVFDPFSQG) lie on the Cytoplasmic side of the membrane. The chain crosses the membrane as a helical span at residues 863–883 (ALLILKIIIPFFLISANLGVL). Residues 884 to 892 (NKRLGVAPS) are Lumenal-facing. The helical transmembrane segment at 893–913 (AIFMVVLTASDVLTLYFFWVV) threads the bilayer. The Cytoplasmic portion of the chain corresponds to 914 to 929 (KDEGSWLEIGSTITHF). Residues 930-950 (AIASFLCVFVAALEFVSAAFI) traverse the membrane as a helical segment. Over 951–981 (AGIEVEDTKSAALTSASTKADEKVPPVAGAE) the chain is Lumenal.

This sequence belongs to the PIGG/PIGN/PIGO family. PIGN subfamily.

The protein resides in the endoplasmic reticulum membrane. It participates in glycolipid biosynthesis; glycosylphosphatidylinositol-anchor biosynthesis. Its function is as follows. Ethanolamine phosphate transferase involved in glycosylphosphatidylinositol-anchor biosynthesis. Transfers ethanolamine phosphate to the first alpha-1,4-linked mannose of the glycosylphosphatidylinositol precursor of GPI-anchor. This is GPI ethanolamine phosphate transferase 1 (MCD4) from Gibberella zeae (strain ATCC MYA-4620 / CBS 123657 / FGSC 9075 / NRRL 31084 / PH-1) (Wheat head blight fungus).